Here is an 817-residue protein sequence, read N- to C-terminus: MDLKTSYKGISLNPIYAGSSAVATVSENGKILATPVLDEINIIDLTPGSRKILHKISNEDEQEITALKLTPDGQYLTYVSQAQLLKIFHLKTGKVVRSMKISSPSYILDADSTSTLLAVGGTDGSIIVVDIENGYITHSFKGHGGTISSLKFYGQLNSKIWLLASGDTNGMVKVWDLVKRKCLHTLQEHTSAVRGLDIIEVPDNDEPSLNLLSGGRDDIINLWDFNMKKKCKLLKTLPVNQQVESCGFLKDGDGKRIIYTAGGDAIFQLIDSESGSVLKRTNKPIEELFIIGVLPILSNSQMFLVLSDQTLQLINVEEDLKNDEDTIQVTSSIAGNHGIIADMRYVGPELNKLALATNSPSLRIIPVPDLSGPEASLPLDVEIYEGHEDLLNSLDATEDGLWIATASKDNTAIVWRYNENSCKFDIYAKYIGHSAAVTAVGLPNIVSKGYPEFLLTASNDLTIKKWIIPKPTASMDVQIIKVSEYTRHAHEKDINALSVSPNDSIFATASYDKTCKIWNLENGELEATLANHKRGLWDVSFCQYDKLLATSSGDKTVKIWSLDTFSVMKTLEGHTNAVQRCSFINKQKQLISCGADGLIKIWDCSSGECLKTLDGHNNRLWALSTMNDGDMIVSADADGVFQFWKDCTEQEIEEEQEKAKLQVEQEQSLQNYMSKGDWTNAFLLAMTLDHPMRLFNVLKRALGESRSRQDTEEGKIEVIFNEELDQAISILNDEQLILLMKRCRDWNTNAKTHTIAQRTIRCILMHHNIAKLSEIPGMVKIVDAIIPYTQRHFTRVDNLVEQSYILDYALVEMDKLF.

WD repeat units follow at residues glutamate 59–lysine 100, serine 102–serine 139, glycine 142–glutamine 187, serine 191–leucine 233, proline 238–arginine 280, glycine 386–aspartate 425, glycine 432–aspartate 476, alanine 489–threonine 528, asparagine 531–glutamate 572, glycine 573–aspartate 614, histidine 616–glutamate 654, and glutamate 664–serine 705.

In terms of assembly, interacts with snoRNA U3. Interacts with MPP10. Component of the ribosomal small subunit (SSU) processome composed of at least 40 protein subunits and snoRNA U3.

The protein localises to the nucleus. It is found in the nucleolus. Involved in nucleolar processing of pre-18S ribosomal RNA. The sequence is that of U3 small nucleolar RNA-associated protein 13 (UTP13) from Saccharomyces cerevisiae (strain ATCC 204508 / S288c) (Baker's yeast).